Here is a 160-residue protein sequence, read N- to C-terminus: Cytochrome b6-f complex subunit 4 (160 aa).

The next 3 membrane-spanning stretches (helical) occupy residues 36-56 (LLYI…GLAV), 95-115 (LLGV…PFLE), and 131-151 (TVFL…ALPI).

It belongs to the cytochrome b family. PetD subfamily. As to quaternary structure, the 4 large subunits of the cytochrome b6-f complex are cytochrome b6, subunit IV (17 kDa polypeptide, petD), cytochrome f and the Rieske protein, while the 4 small subunits are petG, petL, petM and petN. The complex functions as a dimer.

It is found in the plastid. The protein resides in the chloroplast thylakoid membrane. Component of the cytochrome b6-f complex, which mediates electron transfer between photosystem II (PSII) and photosystem I (PSI), cyclic electron flow around PSI, and state transitions. This is Cytochrome b6-f complex subunit 4 from Marchantia polymorpha (Common liverwort).